The primary structure comprises 400 residues: Acetylornithine aminotransferase (400 aa).

Residues 113–114 and F139 each bind pyridoxal 5'-phosphate; that span reads GA. R142 contacts N(2)-acetyl-L-ornithine. 224 to 227 provides a ligand contact to pyridoxal 5'-phosphate; sequence DEVQ. K253 bears the N6-(pyridoxal phosphate)lysine mark. S281 is a binding site for N(2)-acetyl-L-ornithine. T282 provides a ligand contact to pyridoxal 5'-phosphate.

It belongs to the class-III pyridoxal-phosphate-dependent aminotransferase family. ArgD subfamily. As to quaternary structure, homodimer. Pyridoxal 5'-phosphate is required as a cofactor.

Its subcellular location is the cytoplasm. The catalysed reaction is N(2)-acetyl-L-ornithine + 2-oxoglutarate = N-acetyl-L-glutamate 5-semialdehyde + L-glutamate. Its pathway is amino-acid biosynthesis; L-arginine biosynthesis; N(2)-acetyl-L-ornithine from L-glutamate: step 4/4. This chain is Acetylornithine aminotransferase, found in Mycobacterium bovis (strain ATCC BAA-935 / AF2122/97).